We begin with the raw amino-acid sequence, 580 residues long: Amino-acid acetyltransferase, mitochondrial (580 aa).

The region spanning 403-560 (LTMQNLFDDK…NPRHKNGVVN (158 aa)) is the N-acetyltransferase domain.

It belongs to the acetyltransferase family.

The protein resides in the mitochondrion. The catalysed reaction is L-glutamate + acetyl-CoA = N-acetyl-L-glutamate + CoA + H(+). The protein operates within amino-acid biosynthesis; L-arginine biosynthesis; N(2)-acetyl-L-ornithine from L-glutamate: step 1/4. Functionally, N-acetylglutamate synthase involved in arginine biosynthesis. This is Amino-acid acetyltransferase, mitochondrial (ARG2) from Candida dubliniensis (strain CD36 / ATCC MYA-646 / CBS 7987 / NCPF 3949 / NRRL Y-17841) (Yeast).